The primary structure comprises 183 residues: Crossover junction endodeoxyribonuclease RuvC (183 aa).

Catalysis depends on residues aspartate 7, glutamate 66, and aspartate 138. Residues aspartate 7, glutamate 66, and aspartate 138 each coordinate Mg(2+).

Belongs to the RuvC family. As to quaternary structure, homodimer which binds Holliday junction (HJ) DNA. The HJ becomes 2-fold symmetrical on binding to RuvC with unstacked arms; it has a different conformation from HJ DNA in complex with RuvA. In the full resolvosome a probable DNA-RuvA(4)-RuvB(12)-RuvC(2) complex forms which resolves the HJ. The cofactor is Mg(2+).

Its subcellular location is the cytoplasm. It catalyses the reaction Endonucleolytic cleavage at a junction such as a reciprocal single-stranded crossover between two homologous DNA duplexes (Holliday junction).. Its function is as follows. The RuvA-RuvB-RuvC complex processes Holliday junction (HJ) DNA during genetic recombination and DNA repair. Endonuclease that resolves HJ intermediates. Cleaves cruciform DNA by making single-stranded nicks across the HJ at symmetrical positions within the homologous arms, yielding a 5'-phosphate and a 3'-hydroxyl group; requires a central core of homology in the junction. The consensus cleavage sequence is 5'-(A/T)TT(C/G)-3'. Cleavage occurs on the 3'-side of the TT dinucleotide at the point of strand exchange. HJ branch migration catalyzed by RuvA-RuvB allows RuvC to scan DNA until it finds its consensus sequence, where it cleaves and resolves the cruciform DNA. The protein is Crossover junction endodeoxyribonuclease RuvC of Burkholderia ambifaria (strain MC40-6).